A 436-amino-acid chain; its full sequence is Ribulose bisphosphate carboxylase large chain (436 aa).

Substrate contacts are provided by asparagine 104 and threonine 154. Catalysis depends on lysine 156, which acts as the Proton acceptor. Lysine 158 contacts substrate. Mg(2+) contacts are provided by lysine 182, aspartate 184, and glutamate 185. Lysine 182 bears the N6-carboxylysine mark. Residue histidine 275 is the Proton acceptor of the active site. The substrate site is built by arginine 276, histidine 308, and serine 360.

It belongs to the RuBisCO large chain family. Type I subfamily. Heterohexadecamer of 8 large chains and 8 small chains; disulfide-linked. The disulfide link is formed within the large subunit homodimers. It depends on Mg(2+) as a cofactor. Post-translationally, the disulfide bond which can form in the large chain dimeric partners within the hexadecamer appears to be associated with oxidative stress and protein turnover.

It localises to the plastid. The protein localises to the chloroplast. The catalysed reaction is 2 (2R)-3-phosphoglycerate + 2 H(+) = D-ribulose 1,5-bisphosphate + CO2 + H2O. It carries out the reaction D-ribulose 1,5-bisphosphate + O2 = 2-phosphoglycolate + (2R)-3-phosphoglycerate + 2 H(+). Functionally, ruBisCO catalyzes two reactions: the carboxylation of D-ribulose 1,5-bisphosphate, the primary event in carbon dioxide fixation, as well as the oxidative fragmentation of the pentose substrate in the photorespiration process. Both reactions occur simultaneously and in competition at the same active site. This is Ribulose bisphosphate carboxylase large chain from Euglena anabaena (Euglenaria anabaena).